The sequence spans 114 residues: uncharacterized protein (114 aa).

Cys10 is a catalytic residue.

The protein belongs to the ArsC family.

This is an uncharacterized protein from Haemophilus influenzae (strain ATCC 51907 / DSM 11121 / KW20 / Rd).